The primary structure comprises 358 residues: MKPVYIIQRRKSKQVFVGDVAIGGDAPISVQSMTNTETTDVKATVAQIQAIQNAGADLVRVSVPTIDAAEAFKIIKKQVNIPLISDIHFDYKIALKVAEYGADCLRINPGNIGREDRIREVVAAAIDHNIPIRIGVNAGSLEKDLQKKYTEPTPEAMVESAFRQIDILDKLNFDNFKISLKASEIFMTVFAYQQLASQIDNPLHLGITEAGSLRFGTIKSSIGLGLLLSEGIGDTIRISLASDPVDEVRVGFDILKSLNLRSKGVNLIACPSCSRQKFDVIKIVNELESRLEGITAPIDVAVIGCVVNGPGEAKAVSVGLIGGEPNLLYLDGKTHSKITNENLVNELEAQVRNRLKSP.

[4Fe-4S] cluster-binding residues include C270, C273, C305, and E312.

Belongs to the IspG family. [4Fe-4S] cluster serves as cofactor.

It catalyses the reaction (2E)-4-hydroxy-3-methylbut-2-enyl diphosphate + oxidized [flavodoxin] + H2O + 2 H(+) = 2-C-methyl-D-erythritol 2,4-cyclic diphosphate + reduced [flavodoxin]. It functions in the pathway isoprenoid biosynthesis; isopentenyl diphosphate biosynthesis via DXP pathway; isopentenyl diphosphate from 1-deoxy-D-xylulose 5-phosphate: step 5/6. In terms of biological role, converts 2C-methyl-D-erythritol 2,4-cyclodiphosphate (ME-2,4cPP) into 1-hydroxy-2-methyl-2-(E)-butenyl 4-diphosphate. The chain is 4-hydroxy-3-methylbut-2-en-1-yl diphosphate synthase (flavodoxin) from Ruthia magnifica subsp. Calyptogena magnifica.